The chain runs to 273 residues: Glutamate racemase (273 aa).

Substrate is bound by residues 17–18 and 49–50; these read DS and YG. The Proton donor/acceptor role is filled by C80. 81–82 provides a ligand contact to substrate; that stretch reads NT. The active-site Proton donor/acceptor is the C190. 191–192 serves as a coordination point for substrate; it reads TH.

This sequence belongs to the aspartate/glutamate racemases family.

The enzyme catalyses L-glutamate = D-glutamate. Its pathway is cell wall biogenesis; peptidoglycan biosynthesis. In terms of biological role, provides the (R)-glutamate required for cell wall biosynthesis. This Corynebacterium glutamicum (strain ATCC 13032 / DSM 20300 / JCM 1318 / BCRC 11384 / CCUG 27702 / LMG 3730 / NBRC 12168 / NCIMB 10025 / NRRL B-2784 / 534) protein is Glutamate racemase.